The primary structure comprises 267 residues: Ribosomal RNA small subunit methyltransferase A (267 aa).

S-adenosyl-L-methionine is bound by residues Asn13, Leu15, Gly39, Glu59, Asp87, and Asn106.

The protein belongs to the class I-like SAM-binding methyltransferase superfamily. rRNA adenine N(6)-methyltransferase family. RsmA subfamily.

The protein localises to the cytoplasm. The catalysed reaction is adenosine(1518)/adenosine(1519) in 16S rRNA + 4 S-adenosyl-L-methionine = N(6)-dimethyladenosine(1518)/N(6)-dimethyladenosine(1519) in 16S rRNA + 4 S-adenosyl-L-homocysteine + 4 H(+). In terms of biological role, specifically dimethylates two adjacent adenosines (A1518 and A1519) in the loop of a conserved hairpin near the 3'-end of 16S rRNA in the 30S particle. May play a critical role in biogenesis of 30S subunits. The sequence is that of Ribosomal RNA small subunit methyltransferase A from Sulfurimonas denitrificans (strain ATCC 33889 / DSM 1251) (Thiomicrospira denitrificans (strain ATCC 33889 / DSM 1251)).